The chain runs to 393 residues: MSGIIVFHGDTPIAMSQTTDISSIVGNDIIHINDYALRIVPRKSTLLRIHVHSLKELLDINADYTPKYHTLIKEGKIEKGSPFDAIRNINDMSWCELKLYDAGTDTFTVMHHAPKYTIEVTLNKQQMNITDMNELKKEVPVRQTESTTKDIKSKSKTVNWNDIVEEDETKTIMFNLPDDSNPDDDYWPHRSLKVRMSDEYIARHADEENNSFFNPVSPFTAIMNKMHSTPTQGQSPQTPTVVPNAVIEFEGLVMESIKTRMLNESPSSVMVAGQGMYIKMFSMDEKGNISIITRNFSKEKLKLVIIETPKSVDPAEGNRTVIVTSKPVSNGIKLRKLERGMFLRAGDIDLKMAPCANLAEATSECTKFVRAFCKAYNSVVNSNLAIKFPSELD.

It is found in the virion. This chain is Putative outer capsid protein VP9 (S9), found in Micromonas pusilla reovirus (isolate Netherlands/2005) (MpRV).